Consider the following 241-residue polypeptide: 2-C-methyl-D-erythritol 4-phosphate cytidylyltransferase (241 aa).

This sequence belongs to the IspD/TarI cytidylyltransferase family. IspD subfamily.

The catalysed reaction is 2-C-methyl-D-erythritol 4-phosphate + CTP + H(+) = 4-CDP-2-C-methyl-D-erythritol + diphosphate. It functions in the pathway isoprenoid biosynthesis; isopentenyl diphosphate biosynthesis via DXP pathway; isopentenyl diphosphate from 1-deoxy-D-xylulose 5-phosphate: step 2/6. Its function is as follows. Catalyzes the formation of 4-diphosphocytidyl-2-C-methyl-D-erythritol from CTP and 2-C-methyl-D-erythritol 4-phosphate (MEP). This is 2-C-methyl-D-erythritol 4-phosphate cytidylyltransferase from Hahella chejuensis (strain KCTC 2396).